The primary structure comprises 584 residues: MAHVRRKVATLNMALAGSLLMVLGAQSALAQGNFSRQEAARMAHRPGVMPRGGPLFPGRSLAGVPGFPLPSIHTQQAYDPQSDFTARWTRADALQIKAHSDATVAAGQNSLPAQLTMPNIPADFPVINPDVWVWDTWTLIDKHADQFSYNGWEVIFCLTADPNAGYGFDDRHVHARIGFFYRRAGIPASRRPVNGGWTYGGHLFPDGASAQVYAGQTYTNQAEWSGSSRLMQIHGNTVSVFYTDVAFNRDANANNITPPQAIITQTLGRIHADFNHVWFTGFTAHTPLLQPDGVLYQNGAQNEFFNFRDPFTFEDPKHPGVNYMVFEGNTAGQRGVANCTEADLGFRPNDPNAETLQEVLDSGAYYQKANIGLAIATDSTLSKWKFLSPLISANCVNDQTERPQVYLHNGKYYIFTISHRTTFAAGVDGPDGVYGFVGDGIRSDFQPMNYGSGLTMGNPTDLNTAAGTDFDPSPDQNPRAFQSYSHYVMPGGLVESFIDTVENRRGGTLAPTVRVRIAQNASAVDLRYGNGGLGGYGDIPANRADVNIAGFIQDLFGQPTSGLAAQASTNNAQVLAQVRQFLNQ.

Residues M1–A30 form the signal peptide. Q31 is modified (pyrrolidone carboxylic acid). Sucrose is bound by residues W134, D135, S225, R308, and D309. The active-site Nucleophile is D135. C339 and C395 are oxidised to a cystine. E401 functions as the Proton donor/acceptor in the catalytic mechanism.

Belongs to the glycosyl hydrolase 68 family. In terms of assembly, monomer. The N-terminus is blocked. The N-terminal Gln is cyclized to a pyroglutamic acid.

The protein localises to the secreted. It carries out the reaction [6)-beta-D-fructofuranosyl-(2-&gt;](n) alpha-D-glucopyranoside + sucrose = [6)-beta-D-fructofuranosyl-(2-&gt;](n+1) alpha-D-glucopyranoside + D-glucose. Its activity is regulated as follows. Strongly inhibited by Hg(2+) and slightly activated by Co(2+). Not inhibited by the metal ion chelator EDTA, suggesting that this enzyme does not need a metal cofactor. Catalyzes the synthesis of levan, a fructose polymer, by transferring the fructosyl moiety from sucrose to a growing acceptor molecule. Also displays sucrose hydrolase activity. In vitro, catalyzes transfructosylation from sucrose to a variety of acceptors including water (sucrose hydrolysis), glucose (exchange reaction), fructan (polymerase reaction) and sucrose (oligofructoside synthesis). Levansucrase of G.diazotrophicus SRT4, unlike the enzyme of B.subtilis, causes accumulation of large quantities of tri- and tetrasaccharides but small quantities of high-molecular-mass levan. It may act more as a sucrose hydrolase than as a fructan polymerase, and may be the key enzyme in the sucrose metabolism of G.diazotrophicus SRT4. The protein is Levansucrase of Gluconacetobacter diazotrophicus (Acetobacter diazotrophicus).